The following is a 261-amino-acid chain: Glandular kallikrein-7, submandibular/renal (261 aa).

The N-terminal stretch at 1–18 (MWFLILFLDLSLGQIDAA) is a signal peptide. Residues 19–24 (PPGQSR) constitute a propeptide, activation peptide. The Peptidase S1 domain occupies 25–258 (VIGGYKCEKN…FTSWIKEVMK (234 aa)). 5 disulfide bridges follow: Cys31-Cys173, Cys50-Cys66, Cys152-Cys219, Cys184-Cys198, and Cys209-Cys234. His65 acts as the Charge relay system in catalysis. Residue Asn108 is glycosylated (N-linked (GlcNAc...) asparagine). The active-site Charge relay system is Asp120. Ser213 serves as the catalytic Charge relay system.

Belongs to the peptidase S1 family. Kallikrein subfamily. In terms of tissue distribution, kidney and submandibular gland. Not expressed in liver, pancreas, spleen, parotid, testis, cortex, prostate, ovary and pituitary.

The catalysed reaction is Preferential cleavage of Arg-|-Xaa bonds in small molecule substrates. Highly selective action to release kallidin (lysyl-bradykinin) from kininogen involves hydrolysis of Met-|-Xaa or Leu-|-Xaa.. In terms of biological role, glandular kallikreins cleave Met-Lys and Arg-Ser bonds in kininogen to release Lys-bradykinin. Predominant kallikrein protein in the kidney. The protein is Glandular kallikrein-7, submandibular/renal (Klk7) of Rattus norvegicus (Rat).